Reading from the N-terminus, the 384-residue chain is Putative 8-amino-7-oxononanoate synthase (384 aa).

Residue R22 participates in substrate binding. Position 109–110 (109–110) interacts with pyridoxal 5'-phosphate; sequence GY. A substrate-binding site is contributed by H134. Pyridoxal 5'-phosphate-binding positions include S182, 207-210, and 236-239; these read DDAH and TLSK. K239 is subject to N6-(pyridoxal phosphate)lysine. T348 is a substrate binding site.

Belongs to the class-II pyridoxal-phosphate-dependent aminotransferase family. BioF subfamily. As to quaternary structure, homodimer. It depends on pyridoxal 5'-phosphate as a cofactor.

The enzyme catalyses 6-carboxyhexanoyl-[ACP] + L-alanine + H(+) = (8S)-8-amino-7-oxononanoate + holo-[ACP] + CO2. It functions in the pathway cofactor biosynthesis; biotin biosynthesis. Catalyzes the decarboxylative condensation of pimeloyl-[acyl-carrier protein] and L-alanine to produce 8-amino-7-oxononanoate (AON), [acyl-carrier protein], and carbon dioxide. In Caulobacter vibrioides (strain ATCC 19089 / CIP 103742 / CB 15) (Caulobacter crescentus), this protein is Putative 8-amino-7-oxononanoate synthase (bioF).